Consider the following 315-residue polypeptide: Leukocidin-S subunit (315 aa).

An N-terminal signal peptide occupies residues 1–29; the sequence is MLKNKILATTLSVSLLAPLANPLLENAKA.

Belongs to the aerolysin family. In terms of assembly, leukocidin consists of two protein components: F and S.

Its function is as follows. Leukocidin causes cytotoxic changes in polymorphonuclear leukocytes. The polypeptide is Leukocidin-S subunit (lukS) (Staphylococcus aureus).